The primary structure comprises 465 residues: UPF0324 membrane protein CC_0425 (465 aa).

The segment at 97–132 is disordered; it reads HRQPDRAPPARASEQPLRQGRRALRRRPDQRRHRPR. Residues 115 to 132 are compositionally biased toward basic residues; it reads QGRRALRRRPDQRRHRPR. A run of 10 helical transmembrane segments spans residues 135–157, 172–194, 219–241, 251–273, 286–308, 318–340, 352–374, 378–400, 405–427, and 442–464; these read AAAL…LMAV, LLAV…GAGL, AALG…GIGA, LAEA…LAAS, TALV…PPIA, AGVF…ASVS, LSRI…RTAQ, ISGL…ARGL, PALV…GAIS, and LAIL…TRIF.

This sequence belongs to the UPF0324 family.

Its subcellular location is the cell membrane. The polypeptide is UPF0324 membrane protein CC_0425 (Caulobacter vibrioides (strain ATCC 19089 / CIP 103742 / CB 15) (Caulobacter crescentus)).